We begin with the raw amino-acid sequence, 428 residues long: uncharacterized protein (428 aa).

Disordered regions lie at residues 1-25 (MRDN…PTRT), 157-219 (DTAK…TEQV), and 247-271 (DFGT…PWRP). The segment covering 12–22 (GSESQQTTYDP) has biased composition (polar residues). Over residues 157 to 171 (DTAKSNEKLQGDESK) the composition is skewed to basic and acidic residues. Residues 172–186 (SSNGSSSTSTTTQRG) are compositionally biased toward low complexity. Residues 206–217 (GSQGNSGEQGTE) show a composition bias toward polar residues.

This sequence belongs to the adhesin P1 family.

This is an uncharacterized protein from Mycoplasma pneumoniae (strain ATCC 29342 / M129 / Subtype 1) (Mycoplasmoides pneumoniae).